An 81-amino-acid chain; its full sequence is Protein Vpu (81 aa).

The Extracellular segment spans residues 1–6 (MQPIQI). A helical membrane pass occupies residues 7 to 27 (AIVALVVAIIIAIVVWSIVII). At 28–81 (EYRKILRQRKIDRLIDRLIERAEDSGNESEGEISALAEMGVEMGHHAPWDVDDL) the chain is on the cytoplasmic side. Phosphoserine; by host CK2 is present on residues Ser-52 and Ser-56.

The protein belongs to the HIV-1 VPU protein family. In terms of assembly, homopentamer. Interacts with host CD4 and BRTC; these interactions induce proteasomal degradation of CD4. Interacts with host BST2; this interaction leads to the degradation of host BST2. Interacts with host FBXW11. Interacts with host AP1M1; this interaction plays a role in the mistrafficking and subsequent degradation of host BST2. Interacts with host RANBP2; this interaction allows Vpu to down-regulate host BLM sumoylation. In terms of processing, phosphorylated by host CK2. This phosphorylation is necessary for interaction with human BTRC and degradation of CD4.

The protein localises to the host membrane. Its activity is regulated as follows. Ion channel activity is inhibited by hexamethylene amiloride in vitro. Its function is as follows. Enhances virion budding by targeting host CD4 and Tetherin/BST2 to proteasome degradation. Degradation of CD4 prevents any unwanted premature interactions between viral Env and its host receptor CD4 in the endoplasmic reticulum. Degradation of antiretroviral protein Tetherin/BST2 is important for virion budding, as BST2 tethers new viral particles to the host cell membrane. Mechanistically, Vpu bridges either CD4 or BST2 to BTRC, a substrate recognition subunit of the Skp1/Cullin/F-box protein E3 ubiquitin ligase, induces their ubiquitination and subsequent proteasomal degradation. The alteration of the E3 ligase specificity by Vpu seems to promote the degradation of host IKBKB, leading to NF-kappa-B down-regulation and subsequent apoptosis. Acts as a viroporin that forms an oligomeric ion channel in membranes. Modulates the host DNA repair mechanisms to promote degradation of nuclear viral cDNA in cells that are already productively infected in order to suppress immune sensing and proviral hyper-integration (superinfection). Manipulates PML-NBs and modulates SUMOylation of host BLM protein thereby enhancing its DNA-end processing activity toward viral unintegrated linear DNA. Also inhibits RAD52-mediated homologous repair of viral cDNA, preventing the generation of dead-end circular forms of single copies of the long terminal repeat and permitting sustained nucleolytic attack. In Homo sapiens (Human), this protein is Protein Vpu.